The chain runs to 204 residues: ATP phosphoribosyltransferase (204 aa).

The protein belongs to the ATP phosphoribosyltransferase family. Short subfamily. As to quaternary structure, heteromultimer composed of HisG and HisZ subunits.

It localises to the cytoplasm. The catalysed reaction is 1-(5-phospho-beta-D-ribosyl)-ATP + diphosphate = 5-phospho-alpha-D-ribose 1-diphosphate + ATP. Its pathway is amino-acid biosynthesis; L-histidine biosynthesis; L-histidine from 5-phospho-alpha-D-ribose 1-diphosphate: step 1/9. Catalyzes the condensation of ATP and 5-phosphoribose 1-diphosphate to form N'-(5'-phosphoribosyl)-ATP (PR-ATP). Has a crucial role in the pathway because the rate of histidine biosynthesis seems to be controlled primarily by regulation of HisG enzymatic activity. The protein is ATP phosphoribosyltransferase of Hydrogenobaculum sp. (strain Y04AAS1).